A 348-amino-acid polypeptide reads, in one-letter code: L-threonine 3-dehydrogenase (348 aa).

A Zn(2+)-binding site is contributed by Cys38. Residues Thr40 and His43 each act as charge relay system in the active site. The Zn(2+) site is built by His63, Glu64, Cys93, Cys96, Cys99, and Cys107. Residues Ile175, Asp195, Arg200, 263-265 (LGI), and 287-288 (IY) each bind NAD(+).

Belongs to the zinc-containing alcohol dehydrogenase family. As to quaternary structure, homotetramer. It depends on Zn(2+) as a cofactor.

The protein resides in the cytoplasm. It carries out the reaction L-threonine + NAD(+) = (2S)-2-amino-3-oxobutanoate + NADH + H(+). It participates in amino-acid degradation; L-threonine degradation via oxydo-reductase pathway; glycine from L-threonine: step 1/2. In terms of biological role, catalyzes the NAD(+)-dependent oxidation of L-threonine to 2-amino-3-ketobutyrate. This is L-threonine 3-dehydrogenase from Deinococcus radiodurans (strain ATCC 13939 / DSM 20539 / JCM 16871 / CCUG 27074 / LMG 4051 / NBRC 15346 / NCIMB 9279 / VKM B-1422 / R1).